Here is a 319-residue protein sequence, read N- to C-terminus: GATA transcription factor 18 (319 aa).

A compositionally biased stretch (low complexity) spans 1–15; it reads MPDAAAAAAAAQDAD. The disordered stretch occupies residues 1–74; sequence MPDAAAAAAA…AAPEPVSALL (74 aa). The span at 31–60 shows a compositional bias: acidic residues; sequence DNDDDDGDDGTEEDEEEDDDEEGDEEELPP. A Tify domain is found at 74 to 109; it reads LPGSPNQLTLLFQGEVYVFESVTPEKVQAVLLLLGR. A CCT domain is found at 143 to 185; that stretch reads RVASLIRFREKRKERNFDKKIRYAVRKEVALRMQRRKGQFAGR. The GATA-type zinc-finger motif lies at 215-242; it reads CQNCGTSEKMTPAMRRGPAGPRTLCNAC. Positions 292–319 are disordered; that stretch reads ITASHGEVMGDSTPANEAEIGAPKAQSQ.

It belongs to the type IV zinc-finger family. Class C subfamily.

Its subcellular location is the nucleus. Transcriptional activator that specifically binds 5'-GATA-3' or 5'-GAT-3' motifs within gene promoters. The polypeptide is GATA transcription factor 18 (Oryza sativa subsp. japonica (Rice)).